A 551-amino-acid chain; its full sequence is Chaperonin GroEL (551 aa).

ATP-binding positions include 30 to 33, K51, 87 to 91, G415, 479 to 481, and D495; these read TLGP, DGTTT, and NAA.

The protein belongs to the chaperonin (HSP60) family. In terms of assembly, forms a cylinder of 14 subunits composed of two heptameric rings stacked back-to-back. Interacts with the co-chaperonin GroES.

The protein localises to the cytoplasm. It carries out the reaction ATP + H2O + a folded polypeptide = ADP + phosphate + an unfolded polypeptide.. In terms of biological role, together with its co-chaperonin GroES, plays an essential role in assisting protein folding. The GroEL-GroES system forms a nano-cage that allows encapsulation of the non-native substrate proteins and provides a physical environment optimized to promote and accelerate protein folding. The sequence is that of Chaperonin GroEL from Acidithiobacillus ferrooxidans (strain ATCC 23270 / DSM 14882 / CIP 104768 / NCIMB 8455) (Ferrobacillus ferrooxidans (strain ATCC 23270)).